A 383-amino-acid chain; its full sequence is Chitinase-3-like protein 1 (383 aa).

An N-terminal signal peptide occupies residues 1–21 (MGVKASQTGFVVLVLLQCCSA). Positions 22 to 383 (YKLVCYYTSW…NAIKDALAAT (362 aa)) constitute a GH18 domain. A disulfide bridge connects residues Cys26 and Cys51. Asn60 carries an N-linked (GlcNAc...) asparagine glycan. Residues 70-71 (EW), 97-100 (GGWN), Tyr141, 204-207 (MTYD), and Arg263 each bind chitin. The cysteines at positions 300 and 364 are disulfide-linked. An important for AKT1 activation and IL8 production region spans residues 324-338 (QWVGYDDQESVKSKV). A chitin-binding site is contributed by Trp352.

Belongs to the glycosyl hydrolase 18 family. In terms of assembly, monomer. Glycosylated. As to expression, present in activated macrophages, articular chondrocytes, synovial cells as well as in liver. Very low or undetectable expression in non-inflammatory colon. Undetectable in muscle tissues, lung, pancreas, mononuclear cells, or fibroblasts.

The protein resides in the secreted. Its subcellular location is the extracellular space. The protein localises to the cytoplasm. It localises to the perinuclear region. It is found in the endoplasmic reticulum. Carbohydrate-binding lectin with a preference for chitin. Has no chitinase activity. May play a role in tissue remodeling and in the capacity of cells to respond to and cope with changes in their environment. Plays a role in T-helper cell type 2 (Th2) inflammatory response and IL-13-induced inflammation, regulating allergen sensitization, inflammatory cell apoptosis, dendritic cell accumulation and M2 macrophage differentiation. Facilitates invasion of pathogenic enteric bacteria into colonic mucosa and lymphoid organs. Mediates activation of AKT1 signaling pathway and subsequent IL8 production in colonic epithelial cells. Regulates antibacterial responses in lung by contributing to macrophage bacterial killing, controlling bacterial dissemination and augmenting host tolerance. Also regulates hyperoxia-induced injury, inflammation and epithelial apoptosis in lung. This chain is Chitinase-3-like protein 1 (CHI3L1), found in Homo sapiens (Human).